A 184-amino-acid polypeptide reads, in one-letter code: FMRFamide-related peptides (184 aa).

Residues 1-44 (MLVSSSVLKDDSSLRIFKESPNEFEYIIKRHDMDDRKEDTESKE) constitute a propeptide that is removed on maturation. Phenylalanine 56 is modified (phenylalanine amide). Residues 59-83 (GQSFFNNLDNSAFDNEIDSKVSRHP) constitute a propeptide that is removed on maturation. Residue phenylalanine 94 is modified to Phenylalanine amide. A propeptide spanning residues 97-107 (SGMKSTNDEQP) is cleaved from the precursor. Phenylalanine 119 carries the post-translational modification Phenylalanine amide. A propeptide spanning residues 122–184 (NIQIVPTDFD…SLETNSNHRE (63 aa)) is cleaved from the precursor.

Belongs to the FARP (FMRFamide related peptide) family. Expressed throughout the central nervous system.

It localises to the secreted. Functionally, in insects, FMRFamide and related peptides have modulatory actions at skeletal neuromuscular junctions, and peptides that are immunologically related to FMRFamide are released into the circulation from neurohemal organs. This chain is FMRFamide-related peptides, found in Camponotus floridanus (Florida carpenter ant).